The sequence spans 215 residues: Guanylate kinase (215 aa).

The 180-residue stretch at 6-185 (GAILVLSGPS…SEKLLLSIAR (180 aa)) folds into the Guanylate kinase-like domain. 13 to 20 (GPSGSGKS) is an ATP binding site.

It belongs to the guanylate kinase family.

It is found in the cytoplasm. The catalysed reaction is GMP + ATP = GDP + ADP. In terms of biological role, essential for recycling GMP and indirectly, cGMP. The polypeptide is Guanylate kinase (Wolinella succinogenes (strain ATCC 29543 / DSM 1740 / CCUG 13145 / JCM 31913 / LMG 7466 / NCTC 11488 / FDC 602W) (Vibrio succinogenes)).